The following is a 311-amino-acid chain: Acetyl-coenzyme A carboxylase carboxyl transferase subunit alpha (311 aa).

Residues glutamate 34 to glutamate 286 enclose the CoA carboxyltransferase C-terminal domain.

Belongs to the AccA family. In terms of assembly, acetyl-CoA carboxylase is a heterohexamer composed of biotin carboxyl carrier protein (AccB), biotin carboxylase (AccC) and two subunits each of ACCase subunit alpha (AccA) and ACCase subunit beta (AccD).

It is found in the cytoplasm. It carries out the reaction N(6)-carboxybiotinyl-L-lysyl-[protein] + acetyl-CoA = N(6)-biotinyl-L-lysyl-[protein] + malonyl-CoA. It functions in the pathway lipid metabolism; malonyl-CoA biosynthesis; malonyl-CoA from acetyl-CoA: step 1/1. Its function is as follows. Component of the acetyl coenzyme A carboxylase (ACC) complex. First, biotin carboxylase catalyzes the carboxylation of biotin on its carrier protein (BCCP) and then the CO(2) group is transferred by the carboxyltransferase to acetyl-CoA to form malonyl-CoA. The chain is Acetyl-coenzyme A carboxylase carboxyl transferase subunit alpha from Nitratiruptor sp. (strain SB155-2).